Reading from the N-terminus, the 138-residue chain is Low molecular weight protein-tyrosine-phosphatase PtpB (138 aa).

Catalysis depends on Cys7, which acts as the Nucleophile. Arg13 is an active-site residue. Asp111 acts as the Proton donor in catalysis.

This sequence belongs to the low molecular weight phosphotyrosine protein phosphatase family.

It catalyses the reaction O-phospho-L-tyrosyl-[protein] + H2O = L-tyrosyl-[protein] + phosphate. Functionally, dephosphorylates the phosphotyrosine-containing proteins. This is Low molecular weight protein-tyrosine-phosphatase PtpB (ptpB) from Staphylococcus haemolyticus (strain JCSC1435).